Here is a 124-residue protein sequence, read N- to C-terminus: Small ribosomal subunit protein uS12c (124 aa).

The tract at residues 1–28 (MPTFQQLVRSARKPHAKKTKSPALQGCP) is disordered. The segment covering 10–20 (SARKPHAKKTK) has biased composition (basic residues).

The protein belongs to the universal ribosomal protein uS12 family. As to quaternary structure, part of the 30S ribosomal subunit.

The protein resides in the plastid. With S4 and S5 plays an important role in translational accuracy. Located at the interface of the 30S and 50S subunits. This is Small ribosomal subunit protein uS12c (rps12) from Prototheca wickerhamii.